The sequence spans 302 residues: Sulfate adenylyltransferase subunit 2 (302 aa).

Belongs to the PAPS reductase family. CysD subfamily. As to quaternary structure, heterodimer composed of CysD, the smaller subunit, and CysN.

It catalyses the reaction sulfate + ATP + H(+) = adenosine 5'-phosphosulfate + diphosphate. The protein operates within sulfur metabolism; hydrogen sulfide biosynthesis; sulfite from sulfate: step 1/3. Functionally, with CysN forms the ATP sulfurylase (ATPS) that catalyzes the adenylation of sulfate producing adenosine 5'-phosphosulfate (APS) and diphosphate, the first enzymatic step in sulfur assimilation pathway. APS synthesis involves the formation of a high-energy phosphoric-sulfuric acid anhydride bond driven by GTP hydrolysis by CysN coupled to ATP hydrolysis by CysD. The sequence is that of Sulfate adenylyltransferase subunit 2 from Sodalis glossinidius (strain morsitans).